We begin with the raw amino-acid sequence, 642 residues long: Threonine--tRNA ligase (642 aa).

The TGS domain occupies 1-61; it reads MPVITLPDGS…ENDATLAIIT (61 aa). Positions 243-534 are catalytic; sequence DHRKIGKQLD…LTEEFAGFFP (292 aa). Residues C334, H385, and H511 each contribute to the Zn(2+) site.

Belongs to the class-II aminoacyl-tRNA synthetase family. In terms of assembly, homodimer. It depends on Zn(2+) as a cofactor.

Its subcellular location is the cytoplasm. The catalysed reaction is tRNA(Thr) + L-threonine + ATP = L-threonyl-tRNA(Thr) + AMP + diphosphate + H(+). In terms of biological role, catalyzes the attachment of threonine to tRNA(Thr) in a two-step reaction: L-threonine is first activated by ATP to form Thr-AMP and then transferred to the acceptor end of tRNA(Thr). Also edits incorrectly charged L-seryl-tRNA(Thr). The chain is Threonine--tRNA ligase from Salmonella choleraesuis (strain SC-B67).